The chain runs to 430 residues: Adenylosuccinate synthetase (430 aa).

GTP contacts are provided by residues 12-18 and 40-42; these read GDEGKGK and GHT. Catalysis depends on aspartate 13, which acts as the Proton acceptor. Mg(2+) is bound by residues aspartate 13 and glycine 40. IMP is bound by residues 13–16, 38–41, threonine 130, arginine 144, glutamine 224, threonine 239, and arginine 303; these read DEGK and NAGH. Histidine 41 acts as the Proton donor in catalysis. 299–305 provides a ligand contact to substrate; sequence TVTGRKR. GTP is bound by residues arginine 305, 331 to 333, and 413 to 415; these read KLD and STS.

The protein belongs to the adenylosuccinate synthetase family. In terms of assembly, homodimer. Mg(2+) is required as a cofactor.

The protein resides in the cytoplasm. It catalyses the reaction IMP + L-aspartate + GTP = N(6)-(1,2-dicarboxyethyl)-AMP + GDP + phosphate + 2 H(+). It participates in purine metabolism; AMP biosynthesis via de novo pathway; AMP from IMP: step 1/2. Plays an important role in the de novo pathway of purine nucleotide biosynthesis. Catalyzes the first committed step in the biosynthesis of AMP from IMP. This is Adenylosuccinate synthetase from Cereibacter sphaeroides (strain KD131 / KCTC 12085) (Rhodobacter sphaeroides).